Consider the following 131-residue polypeptide: D-ribose pyranase (131 aa).

Histidine 20 serves as the catalytic Proton donor. Residues aspartate 28, histidine 98, and 120–122 (YAN) contribute to the substrate site.

It belongs to the RbsD / FucU family. RbsD subfamily. Homodecamer.

It localises to the cytoplasm. The catalysed reaction is beta-D-ribopyranose = beta-D-ribofuranose. It functions in the pathway carbohydrate metabolism; D-ribose degradation; D-ribose 5-phosphate from beta-D-ribopyranose: step 1/2. Functionally, catalyzes the interconversion of beta-pyran and beta-furan forms of D-ribose. The sequence is that of D-ribose pyranase from Bacillus velezensis (strain DSM 23117 / BGSC 10A6 / LMG 26770 / FZB42) (Bacillus amyloliquefaciens subsp. plantarum).